Consider the following 161-residue polypeptide: N5-carboxyaminoimidazole ribonucleotide mutase (161 aa).

The substrate site is built by S9, D12, and R39.

Belongs to the AIR carboxylase family. Class I subfamily.

It carries out the reaction 5-carboxyamino-1-(5-phospho-D-ribosyl)imidazole + H(+) = 5-amino-1-(5-phospho-D-ribosyl)imidazole-4-carboxylate. It functions in the pathway purine metabolism; IMP biosynthesis via de novo pathway; 5-amino-1-(5-phospho-D-ribosyl)imidazole-4-carboxylate from 5-amino-1-(5-phospho-D-ribosyl)imidazole (N5-CAIR route): step 2/2. Catalyzes the conversion of N5-carboxyaminoimidazole ribonucleotide (N5-CAIR) to 4-carboxy-5-aminoimidazole ribonucleotide (CAIR). This chain is N5-carboxyaminoimidazole ribonucleotide mutase, found in Vibrio cholerae serotype O1 (strain ATCC 39315 / El Tor Inaba N16961).